A 188-amino-acid polypeptide reads, in one-letter code: MAERANDIRPGQVLEHNGGLFLVVGIMHTQPGKGGAYIQAEMKNIKTGAKHYERFRSDATIRRAILDEEEYVYLFTEGNIVNLMHPSNYEQITINLDLLGEKKIYLQDNMKIKVVAYQDKIISAHVPDYVTLAVKETESVIKGQTATASYKPAILENGMRVNVPQFIKEEDKIVVYTPDDSYYERVKE.

Belongs to the elongation factor P family.

The protein localises to the cytoplasm. Its pathway is protein biosynthesis; polypeptide chain elongation. Its function is as follows. Involved in peptide bond synthesis. Stimulates efficient translation and peptide-bond synthesis on native or reconstituted 70S ribosomes in vitro. Probably functions indirectly by altering the affinity of the ribosome for aminoacyl-tRNA, thus increasing their reactivity as acceptors for peptidyl transferase. This chain is Elongation factor P, found in Wolbachia sp. subsp. Drosophila simulans (strain wRi).